The sequence spans 223 residues: Ribose-5-phosphate isomerase A (223 aa).

Residues threonine 26–threonine 29, aspartate 82–aspartate 85, and lysine 95–glycine 98 each bind substrate. The Proton acceptor role is filled by glutamate 104. Position 122 (lysine 122) interacts with substrate.

The protein belongs to the ribose 5-phosphate isomerase family. As to quaternary structure, homodimer.

It catalyses the reaction aldehydo-D-ribose 5-phosphate = D-ribulose 5-phosphate. It participates in carbohydrate degradation; pentose phosphate pathway; D-ribose 5-phosphate from D-ribulose 5-phosphate (non-oxidative stage): step 1/1. Its function is as follows. Catalyzes the reversible conversion of ribose-5-phosphate to ribulose 5-phosphate. This Streptococcus agalactiae serotype III (strain NEM316) protein is Ribose-5-phosphate isomerase A.